Here is a 491-residue protein sequence, read N- to C-terminus: MPGARDALCHQALQLLAELCARGALEHDSCQDFIYHLRDRARPRLRDPDISVSLLTLVVTACGLALFGVSLFVSWKLCWVPWRERGLFSGSKDNNQEPLNYTDTETNEQENSEDFLDPPTPCPDSSMKISHTSPDIPLSTQPGGQDNCAHAVRVQRQVTEPTPSARHNSIRRQLNLSNPDFNIQQLQRQEQLTGIGRIKPELYKQRSLDNDDGRRSNSKACGKLNFILKYDCDLEQLIVKIHKAVNLPAKDFSGTSDPYVKIYLLPDRKTKHQTKVHRKTLNPVFDEVFLFPVHYNDLEARKLHFSVYDFDRFSRHDLIGQVVVDHFFDLADFPRECILWKDIEYVTNDNVDLGELMFSLCYLPTAGRLTITIIKARNLKAMDITGASDPYVKVSLMCDGRRLKKRKTSTKRNTLNPVYNEAIVFDVPPESIDQIHLSIAVMDYDRVGHNEVIGVCQVGNEAERLGRDHWSEMLSYPRKPIAHWHSLLEKR.

Over 1–52 (MPGARDALCHQALQLLAELCARGALEHDSCQDFIYHLRDRARPRLRDPDISV) the chain is Vesicular. Residues 9 to 31 (CHQALQLLAELCARGALEHDSCQ) are cysteine motif. The helical transmembrane segment at 53–73 (SLLTLVVTACGLALFGVSLFV) threads the bilayer. At 74–491 (SWKLCWVPWR…AHWHSLLEKR (418 aa)) the chain is on the cytoplasmic side. The span at 91 to 104 (SKDNNQEPLNYTDT) shows a compositional bias: polar residues. The interval 91-147 (SKDNNQEPLNYTDTETNEQENSEDFLDPPTPCPDSSMKISHTSPDIPLSTQPGGQDN) is disordered. Acidic residues predominate over residues 105-116 (ETNEQENSEDFL). The span at 127 to 144 (MKISHTSPDIPLSTQPGG) shows a compositional bias: polar residues. A Phosphoserine modification is found at serine 177. 2 C2 domains span residues 220-341 (ACGK…ILWK) and 352-485 (DLGE…AHWH). Residues aspartate 251, aspartate 257, aspartate 309, phenylalanine 310, aspartate 311, serine 314, aspartate 317, aspartate 383, aspartate 389, aspartate 443, and aspartate 445 each contribute to the Ca(2+) site.

This sequence belongs to the synaptotagmin family. In terms of assembly, homodimer; disulfide-linked via the cysteine motif. Can also form heterodimers with SYT3, SYT6, SYT7 and SYT10. It depends on Ca(2+) as a cofactor.

It is found in the cytoplasmic vesicle. Its subcellular location is the secretory vesicle. The protein resides in the synaptic vesicle membrane. May be involved in Ca(2+)-dependent exocytosis of secretory vesicles through Ca(2+) and phospholipid binding to the C2 domain or may serve as Ca(2+) sensors in the process of vesicular trafficking and exocytosis. The polypeptide is Synaptotagmin-9 (Syt9) (Rattus norvegicus (Rat)).